Consider the following 218-residue polypeptide: MIGKITGRLEYRASDHVLIDVRGVGYLVFCSERTLAALPGVGEVVALYTDLLVREDVMQLFGFTTLTEKEWHRLLTSVQGVGAKASLAILGTLGADGVSRAIALGDWNAVKAAKGVGPKIAQRVVLDLKDKAPSVMGMSDTQATVAAQSSDAVIETRAAPSPVVQNPSAQAEALSALSNLGYAPGDAAAAVAQAAGELPDAETPDLIRAALKRLAPKG.

The interval 1–64 (MIGKITGRLE…EDVMQLFGFT (64 aa)) is domain I. The interval 65–143 (TLTEKEWHRL…SVMGMSDTQA (79 aa)) is domain II. A flexible linker region spans residues 144 to 164 (TVAAQSSDAVIETRAAPSPVV). Residues 165-218 (QNPSAQAEALSALSNLGYAPGDAAAAVAQAAGELPDAETPDLIRAALKRLAPKG) form a domain III region.

It belongs to the RuvA family. Homotetramer. Forms an RuvA(8)-RuvB(12)-Holliday junction (HJ) complex. HJ DNA is sandwiched between 2 RuvA tetramers; dsDNA enters through RuvA and exits via RuvB. An RuvB hexamer assembles on each DNA strand where it exits the tetramer. Each RuvB hexamer is contacted by two RuvA subunits (via domain III) on 2 adjacent RuvB subunits; this complex drives branch migration. In the full resolvosome a probable DNA-RuvA(4)-RuvB(12)-RuvC(2) complex forms which resolves the HJ.

It localises to the cytoplasm. Its function is as follows. The RuvA-RuvB-RuvC complex processes Holliday junction (HJ) DNA during genetic recombination and DNA repair, while the RuvA-RuvB complex plays an important role in the rescue of blocked DNA replication forks via replication fork reversal (RFR). RuvA specifically binds to HJ cruciform DNA, conferring on it an open structure. The RuvB hexamer acts as an ATP-dependent pump, pulling dsDNA into and through the RuvAB complex. HJ branch migration allows RuvC to scan DNA until it finds its consensus sequence, where it cleaves and resolves the cruciform DNA. This Roseobacter denitrificans (strain ATCC 33942 / OCh 114) (Erythrobacter sp. (strain OCh 114)) protein is Holliday junction branch migration complex subunit RuvA.